The following is a 500-amino-acid chain: Lysine--tRNA ligase (500 aa).

Positions 410 and 417 each coordinate Mg(2+).

It belongs to the class-II aminoacyl-tRNA synthetase family. In terms of assembly, homodimer. The cofactor is Mg(2+).

It is found in the cytoplasm. The enzyme catalyses tRNA(Lys) + L-lysine + ATP = L-lysyl-tRNA(Lys) + AMP + diphosphate. In Shewanella sp. (strain ANA-3), this protein is Lysine--tRNA ligase.